A 347-amino-acid chain; its full sequence is MKIAVDAMGGDNAPEEIVKGVSEARKALPDVEFILYGKKDEIAKYMDDFRNVKVVHTDEVITMEDEPVKAVRRKKNSSMILAAQAVKNGDADAIFSAGNTGALLAAGLFIIGRIKGLDRPGMTTTLPSLKGENDNFTMLDVGANAESKAKNLHDFAILGNFYGTNVMHVTNPRIALLNNGTEYDKGDKIHKEAYQLLKNDSSLNFVGNIESRELLNGTADVVVTDGFTGNAVLKNIEGTALSMLKLVKETIMNNGVKGKMGGLLLKSAFSQIKDQMDYSKQGGAVLLGVKAPVVKAHGSSNANQVKNALVQVHEIVDSKLVKNLADYFEMHLESIKQDDVDKENENN.

The protein belongs to the PlsX family. In terms of assembly, homodimer. Probably interacts with PlsY.

It localises to the cytoplasm. It catalyses the reaction a fatty acyl-[ACP] + phosphate = an acyl phosphate + holo-[ACP]. It functions in the pathway lipid metabolism; phospholipid metabolism. Its function is as follows. Catalyzes the reversible formation of acyl-phosphate (acyl-PO(4)) from acyl-[acyl-carrier-protein] (acyl-ACP). This enzyme utilizes acyl-ACP as fatty acyl donor, but not acyl-CoA. This is Phosphate acyltransferase from Pediococcus pentosaceus (strain ATCC 25745 / CCUG 21536 / LMG 10740 / 183-1w).